The sequence spans 563 residues: Rhotekin (563 aa).

Residue arginine 14 is modified to Omega-N-methylarginine. One can recognise an REM-1 domain in the interval 17–98; sequence ALEMEFKRGR…LQRRKEAQVL (82 aa). 2 positions are modified to phosphoserine: serine 30 and serine 106. The tract at residues 96 to 116 is disordered; that stretch reads QVLGKTSRRPSDSGPPAERSP. The residue at position 230 (arginine 230) is an Asymmetric dimethylarginine. Phosphoserine is present on serine 232. In terms of domain architecture, PH spans 309 to 416; it reads QPTASGTLRV…WMEALWQLFF (108 aa). Residues 518-563 form a disordered region; that stretch reads TFSLDAVPPDHSPRARSVAPLPPQRSPRTRGLCSKGQPRTWLQSPV. Serine 520, serine 529, and serine 543 each carry phosphoserine.

As to quaternary structure, interacts via its C-terminal region with the TAX1BP3 PDZ domain. This interaction facilitates Rho-mediated activation of the c-Fos serum response element (SRE). Interacts with SEPT9. Specifically binds to GTP-bound RHOA, RHOB and RHOC and inhibits their GTPase activity. Highly expressed in prostate, moderately in kidney, heart, brain, spleen, testis, placenta, small intestine, pancreas, skeletal muscle and peripheral blood leukocytes, and weakly in ovary, colon and thymus. Weakly expressed in all normal cell lines tested. Overexpressed in various cancer cell lines.

Mediates Rho signaling to activate NF-kappa-B and may confer increased resistance to apoptosis to cells in gastric tumorigenesis. May play a novel role in the organization of septin structures. The chain is Rhotekin from Homo sapiens (Human).